Consider the following 226-residue polypeptide: PKHD-type hydroxylase Pput_0892 (226 aa).

In terms of domain architecture, Fe2OG dioxygenase spans Lys-78–Ser-178. Residues His-96, Asp-98, and His-159 each coordinate Fe cation. Arg-169 lines the 2-oxoglutarate pocket.

It depends on Fe(2+) as a cofactor. The cofactor is L-ascorbate.

This is PKHD-type hydroxylase Pput_0892 from Pseudomonas putida (strain ATCC 700007 / DSM 6899 / JCM 31910 / BCRC 17059 / LMG 24140 / F1).